A 20-amino-acid chain; its full sequence is M-poneritoxin-Ng1f (20 aa).

Residue Lys20 is modified to Lysine amide.

In terms of tissue distribution, expressed by the venom gland.

The protein localises to the secreted. It is found in the target cell membrane. In terms of biological role, has activity against Gram-positive bacteria. Has insecticidal and hemolytic activities. May act by disrupting the integrity of the bacterial cell membrane. The polypeptide is M-poneritoxin-Ng1f (Neoponera goeldii (Ponerine ant)).